The chain runs to 483 residues: Glutamate--tRNA ligase (483 aa).

The short motif at 11 to 21 is the 'HIGH' region element; it reads PSPTGLLHIGN. Positions 255-259 match the 'KMSKS' region motif; it reads KLSKR. K258 is an ATP binding site.

The protein belongs to the class-I aminoacyl-tRNA synthetase family. Glutamate--tRNA ligase type 1 subfamily. In terms of assembly, monomer.

The protein localises to the cytoplasm. The catalysed reaction is tRNA(Glu) + L-glutamate + ATP = L-glutamyl-tRNA(Glu) + AMP + diphosphate. Functionally, catalyzes the attachment of glutamate to tRNA(Glu) in a two-step reaction: glutamate is first activated by ATP to form Glu-AMP and then transferred to the acceptor end of tRNA(Glu). This Lactococcus lactis subsp. cremoris (strain MG1363) protein is Glutamate--tRNA ligase.